We begin with the raw amino-acid sequence, 172 residues long: Probable phosphatase YqeG (172 aa).

Functionally, has low dephosphorylation activity on GMP and glucose-6-phosphate. In Bacillus subtilis (strain 168), this protein is Probable phosphatase YqeG (yqeG).